Reading from the N-terminus, the 337-residue chain is Ribosomal RNA small subunit methyltransferase H (337 aa).

S-adenosyl-L-methionine-binding positions include 36–38 (GGH), Asp56, Phe82, Asp100, and Gln107. The segment at 314–337 (GLERRSGRIPNPRSPIPASQGDAR) is disordered.

It belongs to the methyltransferase superfamily. RsmH family.

It is found in the cytoplasm. The catalysed reaction is cytidine(1402) in 16S rRNA + S-adenosyl-L-methionine = N(4)-methylcytidine(1402) in 16S rRNA + S-adenosyl-L-homocysteine + H(+). Its function is as follows. Specifically methylates the N4 position of cytidine in position 1402 (C1402) of 16S rRNA. The polypeptide is Ribosomal RNA small subunit methyltransferase H (Xanthomonas oryzae pv. oryzae (strain PXO99A)).